We begin with the raw amino-acid sequence, 469 residues long: Argininosuccinate lyase (469 aa).

It belongs to the lyase 1 family. Argininosuccinate lyase subfamily.

It is found in the cytoplasm. The enzyme catalyses 2-(N(omega)-L-arginino)succinate = fumarate + L-arginine. It functions in the pathway amino-acid biosynthesis; L-arginine biosynthesis; L-arginine from L-ornithine and carbamoyl phosphate: step 3/3. The polypeptide is Argininosuccinate lyase (Polaromonas naphthalenivorans (strain CJ2)).